The following is a 1268-amino-acid chain: Protein transport protein Sec24B (1268 aa).

Composition is skewed to low complexity over residues 1-14 and 21-48; these read MSAP…AASA and GGAA…GPAQ. Disordered stretches follow at residues 1–71, 216–263, 303–345, and 362–451; these read MSAP…SGHY, APTV…LTWS, QNVQ…SVTQ, and NNQA…VVPQ. Serine 2 is subject to N-acetylserine. Position 55 is a phosphoserine (serine 55). Positions 225 to 234 are enriched in polar residues; sequence NSFSGQNTAI. Composition is skewed to low complexity over residues 245 to 255, 311 to 332, and 365 to 375; these read SQQHHQQQSLS, SPVV…TPPT, and ASSAPTPLSST. Threonine 329 carries the post-translational modification Phosphothreonine. Residues 376-389 are compositionally biased toward acidic residues; that stretch reads SDDEEEEEEDEEAG. Residues 426–450 show a composition bias toward pro residues; it reads APDPAPEPDPASAPAPASAPAPVVP. 4 residues coordinate Zn(2+): cysteine 605, cysteine 608, cysteine 626, and cysteine 629. The zinc finger-like stretch occupies residues 605 to 629; sequence CRSCRTYINPFVSFIDQRRWKCNLC. A Gelsolin-like repeat occupies 1141–1213; the sequence is PQPPLQKLSA…TLSSERARSF (73 aa). A Phosphoserine modification is found at serine 1224.

Belongs to the SEC23/SEC24 family. SEC24 subfamily. As to quaternary structure, COPII is composed of at least five proteins: the Sec23/24 complex, the Sec13/31 complex and SAR1. Interacts with STING1; promoting STING1 translocation to COPII vesicles in a STEEP1-dependent manner. Interacts with RNF139. Interacts with TMED2 and TMED10. Interacts with CNIH4.

It localises to the cytoplasmic vesicle. It is found in the COPII-coated vesicle membrane. Its subcellular location is the endoplasmic reticulum membrane. The protein resides in the cytoplasm. The protein localises to the cytosol. In terms of biological role, component of the coat protein complex II (COPII) which promotes the formation of transport vesicles from the endoplasmic reticulum (ER). The coat has two main functions, the physical deformation of the endoplasmic reticulum membrane into vesicles and the selection of cargo molecules for their transport to the Golgi complex. Plays a central role in cargo selection within the COPII complex and together with SEC24A may have a different specificity compared to SEC24C and SEC24D. May package preferentially cargos with cytoplasmic DxE or LxxLE motifs and may also recognize conformational epitopes. This Homo sapiens (Human) protein is Protein transport protein Sec24B.